Reading from the N-terminus, the 239-residue chain is tRNA (guanine-N(7)-)-methyltransferase (239 aa).

Glu69, Glu94, Asp121, and Asp144 together coordinate S-adenosyl-L-methionine. Asp144 is a catalytic residue. Lys148 contacts substrate. Residues 150-155 form an interaction with RNA region; sequence RHNKRR. Substrate is bound by residues Asp180 and 217–220; that span reads TKFE.

It belongs to the class I-like SAM-binding methyltransferase superfamily. TrmB family. As to quaternary structure, monomer.

The catalysed reaction is guanosine(46) in tRNA + S-adenosyl-L-methionine = N(7)-methylguanosine(46) in tRNA + S-adenosyl-L-homocysteine. The protein operates within tRNA modification; N(7)-methylguanine-tRNA biosynthesis. In terms of biological role, catalyzes the formation of N(7)-methylguanine at position 46 (m7G46) in tRNA. This is tRNA (guanine-N(7)-)-methyltransferase from Escherichia coli O6:H1 (strain CFT073 / ATCC 700928 / UPEC).